We begin with the raw amino-acid sequence, 433 residues long: Adenylosuccinate synthetase (433 aa).

GTP-binding positions include Gly-11–Lys-17 and Gly-39–Thr-41. The active-site Proton acceptor is Asp-12. Residues Asp-12 and Gly-39 each contribute to the Mg(2+) site. Residues Asp-12 to Lys-15, Asn-37 to His-40, Thr-134, Arg-148, Asn-230, Thr-245, and Arg-309 contribute to the IMP site. The active-site Proton donor is His-40. Val-305 to Arg-311 is a substrate binding site. GTP contacts are provided by residues Arg-311, Lys-337–Asp-339, and Gly-419–Gly-421.

The protein belongs to the adenylosuccinate synthetase family. As to quaternary structure, homodimer. The cofactor is Mg(2+).

The protein resides in the cytoplasm. The catalysed reaction is IMP + L-aspartate + GTP = N(6)-(1,2-dicarboxyethyl)-AMP + GDP + phosphate + 2 H(+). The protein operates within purine metabolism; AMP biosynthesis via de novo pathway; AMP from IMP: step 1/2. Plays an important role in the de novo pathway and in the salvage pathway of purine nucleotide biosynthesis. Catalyzes the first committed step in the biosynthesis of AMP from IMP. The polypeptide is Adenylosuccinate synthetase (Saccharomyces cerevisiae (strain Lalvin EC1118 / Prise de mousse) (Baker's yeast)).